A 445-amino-acid chain; its full sequence is Phosphoglucosamine mutase (445 aa).

Serine 102 (phosphoserine intermediate) is an active-site residue. Serine 102, aspartate 241, aspartate 243, and aspartate 245 together coordinate Mg(2+). Serine 102 carries the phosphoserine modification.

It belongs to the phosphohexose mutase family. The cofactor is Mg(2+). Post-translationally, activated by phosphorylation.

The enzyme catalyses alpha-D-glucosamine 1-phosphate = D-glucosamine 6-phosphate. In terms of biological role, catalyzes the conversion of glucosamine-6-phosphate to glucosamine-1-phosphate. In Cronobacter sakazakii (strain ATCC BAA-894) (Enterobacter sakazakii), this protein is Phosphoglucosamine mutase.